We begin with the raw amino-acid sequence, 265 residues long: Thymidylate synthase (265 aa).

R21 contributes to the dUMP binding site. A (6R)-5,10-methylene-5,6,7,8-tetrahydrofolate-binding site is contributed by H51. DUMP is bound at residue 127 to 128 (RR). Residue C147 is the Nucleophile of the active site. Residues 167 to 170 (RSAD), N178, and 208 to 210 (HLY) each bind dUMP. D170 provides a ligand contact to (6R)-5,10-methylene-5,6,7,8-tetrahydrofolate. S264 is a binding site for (6R)-5,10-methylene-5,6,7,8-tetrahydrofolate.

Belongs to the thymidylate synthase family. Bacterial-type ThyA subfamily. Homodimer.

The protein resides in the cytoplasm. The enzyme catalyses dUMP + (6R)-5,10-methylene-5,6,7,8-tetrahydrofolate = 7,8-dihydrofolate + dTMP. It functions in the pathway pyrimidine metabolism; dTTP biosynthesis. Its function is as follows. Catalyzes the reductive methylation of 2'-deoxyuridine-5'-monophosphate (dUMP) to 2'-deoxythymidine-5'-monophosphate (dTMP) while utilizing 5,10-methylenetetrahydrofolate (mTHF) as the methyl donor and reductant in the reaction, yielding dihydrofolate (DHF) as a by-product. This enzymatic reaction provides an intracellular de novo source of dTMP, an essential precursor for DNA biosynthesis. The polypeptide is Thymidylate synthase (Neisseria gonorrhoeae).